We begin with the raw amino-acid sequence, 142 residues long: Large ribosomal subunit protein uL13 (142 aa).

This sequence belongs to the universal ribosomal protein uL13 family. In terms of assembly, part of the 50S ribosomal subunit.

This protein is one of the early assembly proteins of the 50S ribosomal subunit, although it is not seen to bind rRNA by itself. It is important during the early stages of 50S assembly. This chain is Large ribosomal subunit protein uL13, found in Shewanella oneidensis (strain ATCC 700550 / JCM 31522 / CIP 106686 / LMG 19005 / NCIMB 14063 / MR-1).